The sequence spans 240 residues: MQAKIKNKRVLVKFSGEALAGDNQFGIDIHVLDHIAKEIRSLVENDIEVGIVIGGGNIIRGVSAAQGGIIRRTSGDYMGMLATVINAVAMQEALEHIGLDTRVQSAIEIKEICESYIYRKAIRHLEKGRVVIFGAGTGNPFFTTDTAATLRAIEIGSDLIIKATKVDGIYDKDPNKFKDAKKLDTLSYNDALIGDIEVMDDTAISLAKDNKLPIVVCNMFKKGNLLQVIKHQQGVFSMVK.

Residue 13 to 16 (KFSG) coordinates ATP. Gly55 is a binding site for UMP. The ATP site is built by Gly56 and Arg60. UMP contacts are provided by residues Asp76 and 137 to 144 (TGNPFFTT). ATP is bound by residues Thr164, Tyr170, and Asp173.

The protein belongs to the UMP kinase family. Homohexamer.

The protein resides in the cytoplasm. It catalyses the reaction UMP + ATP = UDP + ADP. It functions in the pathway pyrimidine metabolism; CTP biosynthesis via de novo pathway; UDP from UMP (UMPK route): step 1/1. Its activity is regulated as follows. Inhibited by UTP. Its function is as follows. Catalyzes the reversible phosphorylation of UMP to UDP. The protein is Uridylate kinase of Helicobacter pylori (strain J99 / ATCC 700824) (Campylobacter pylori J99).